The primary structure comprises 174 residues: Nucleoside-triphosphatase THEP1 (174 aa).

Residues 8–15 (GIPGIGKS) and 99–106 (LIVIDEVG) contribute to the ATP site.

It belongs to the THEP1 NTPase family.

The catalysed reaction is a ribonucleoside 5'-triphosphate + H2O = a ribonucleoside 5'-diphosphate + phosphate + H(+). Functionally, has nucleotide phosphatase activity towards ATP, GTP, CTP, TTP and UTP. May hydrolyze nucleoside diphosphates with lower efficiency. The chain is Nucleoside-triphosphatase THEP1 from Methanosarcina barkeri (strain Fusaro / DSM 804).